Consider the following 459-residue polypeptide: UDP-glycosyltransferase 78D3 (459 aa).

UDP-alpha-D-glucose contacts are provided by residues 338–340 (APQ), 355–363 (HGGWNSVLE), and 377–380 (FGDH).

This sequence belongs to the UDP-glycosyltransferase family.

Functionally, possesses low quercetin 3-O-glucosyltransferase activity in vitro. The chain is UDP-glycosyltransferase 78D3 (UGT78D3) from Arabidopsis thaliana (Mouse-ear cress).